Here is a 206-residue protein sequence, read N- to C-terminus: ATP-dependent dethiobiotin synthetase BioD (206 aa).

Position 12–17 (12–17 (DSGKTL)) interacts with ATP. Position 16 (T16) interacts with Mg(2+). The active site involves K32. Mg(2+) is bound at residue E99. Residue 99–102 (EGAG) coordinates ATP.

Belongs to the dethiobiotin synthetase family. As to quaternary structure, homodimer. Mg(2+) serves as cofactor.

It is found in the cytoplasm. The catalysed reaction is (7R,8S)-7,8-diammoniononanoate + CO2 + ATP = (4R,5S)-dethiobiotin + ADP + phosphate + 3 H(+). The protein operates within cofactor biosynthesis; biotin biosynthesis; biotin from 7,8-diaminononanoate: step 1/2. Its function is as follows. Catalyzes a mechanistically unusual reaction, the ATP-dependent insertion of CO2 between the N7 and N8 nitrogen atoms of 7,8-diaminopelargonic acid (DAPA, also called 7,8-diammoniononanoate) to form a ureido ring. The sequence is that of ATP-dependent dethiobiotin synthetase BioD from Cytophaga hutchinsonii (strain ATCC 33406 / DSM 1761 / CIP 103989 / NBRC 15051 / NCIMB 9469 / D465).